The primary structure comprises 317 residues: tRNA dimethylallyltransferase (317 aa).

14–21 serves as a coordination point for ATP; the sequence is GPTAVGKT. 16–21 is a binding site for substrate; that stretch reads TAVGKT. Residues 39 to 42 form an interaction with substrate tRNA region; sequence DSMQ.

The protein belongs to the IPP transferase family. In terms of assembly, monomer. The cofactor is Mg(2+).

The catalysed reaction is adenosine(37) in tRNA + dimethylallyl diphosphate = N(6)-dimethylallyladenosine(37) in tRNA + diphosphate. Functionally, catalyzes the transfer of a dimethylallyl group onto the adenine at position 37 in tRNAs that read codons beginning with uridine, leading to the formation of N6-(dimethylallyl)adenosine (i(6)A). This chain is tRNA dimethylallyltransferase, found in Bacillus cereus (strain AH187).